A 409-amino-acid polypeptide reads, in one-letter code: Cuticle-degrading serine protease (409 aa).

A signal peptide spans 1–21 (MLTNGLISLLAIAGLATNAFA). The propeptide occupies 22 to 123 (GPIRKVSNAG…VEQDTVVTTY (102 aa)). Residues 39–122 (KYIVVLKKGL…YVEQDTVVTT (84 aa)) form the Inhibitor I9 domain. One can recognise a Peptidase S8 domain in the interval 130–409 (TWGLDRISHE…PNKIAYNGYA (280 aa)). The Charge relay system role is filled by D164. N178 carries N-linked (GlcNAc...) asparagine glycosylation. The active-site Charge relay system is the H200. N-linked (GlcNAc...) asparagine glycosylation occurs at N252. Residue S353 is the Charge relay system of the active site.

It belongs to the peptidase S8 family.

It is found in the secreted. With respect to regulation, inhibited by PMSF, SSI, the peptide Phe-Val and by Phe, but not by EDTA. Its function is as follows. Hydrolyzes gelatin, casein, the chromogenic substrate azocoll and the cuticle of the nematode P.redivivus. Immobilizes P.redivivus. The polypeptide is Cuticle-degrading serine protease (Arthrobotrys oligospora (strain ATCC 24927 / CBS 115.81 / DSM 1491) (Nematode-trapping fungus)).